Reading from the N-terminus, the 311-residue chain is Malate dehydrogenase (311 aa).

NAD(+) is bound by residues 7–13 (GAAGGIG) and Asp-34. Positions 81 and 87 each coordinate substrate. Residues Asn-94 and 117–119 (ITN) contribute to the NAD(+) site. Positions 119 and 153 each coordinate substrate. Catalysis depends on His-177, which acts as the Proton acceptor. Met-227 provides a ligand contact to NAD(+).

It belongs to the LDH/MDH superfamily. MDH type 1 family. As to quaternary structure, homodimer.

The enzyme catalyses (S)-malate + NAD(+) = oxaloacetate + NADH + H(+). Catalyzes the reversible oxidation of malate to oxaloacetate. The chain is Malate dehydrogenase from Aliivibrio fischeri (strain MJ11) (Vibrio fischeri).